The following is a 367-amino-acid chain: Peptide chain release factor 2 (367 aa).

Glutamine 254 bears the N5-methylglutamine mark.

This sequence belongs to the prokaryotic/mitochondrial release factor family. In terms of processing, methylated by PrmC. Methylation increases the termination efficiency of RF2.

It localises to the cytoplasm. In terms of biological role, peptide chain release factor 2 directs the termination of translation in response to the peptide chain termination codons UGA and UAA. The protein is Peptide chain release factor 2 of Burkholderia cenocepacia (strain ATCC BAA-245 / DSM 16553 / LMG 16656 / NCTC 13227 / J2315 / CF5610) (Burkholderia cepacia (strain J2315)).